The sequence spans 178 residues: Large ribosomal subunit protein uL6 (178 aa).

It belongs to the universal ribosomal protein uL6 family. Part of the 50S ribosomal subunit.

In terms of biological role, this protein binds to the 23S rRNA, and is important in its secondary structure. It is located near the subunit interface in the base of the L7/L12 stalk, and near the tRNA binding site of the peptidyltransferase center. The chain is Large ribosomal subunit protein uL6 from Helicobacter pylori (strain HPAG1).